The following is a 143-amino-acid chain: Transcriptional regulator MraZ (143 aa).

SpoVT-AbrB domains lie at 5–47 and 76–119; these read EYKH…PMHE and ATEC…SSKR.

Belongs to the MraZ family. As to quaternary structure, forms oligomers.

The protein resides in the cytoplasm. Its subcellular location is the nucleoid. In Halothermothrix orenii (strain H 168 / OCM 544 / DSM 9562), this protein is Transcriptional regulator MraZ.